A 394-amino-acid chain; its full sequence is Alpha-2B adrenergic receptor (394 aa).

The helical transmembrane segment at 1–25 threads the bilayer; sequence AIAAVITFLILFTIFGNALVILAVL. Topologically, residues 26–36 are cytoplasmic; sequence TSRSLRAPQNL. Residues 37–62 traverse the membrane as a helical segment; the sequence is FLVSLAAADILVATLIIPFSLANELL. Residues 63 to 72 are Extracellular-facing; that stretch reads GYWYFRRTWC. An intrachain disulfide couples Cys-72 to Cys-151. A helical membrane pass occupies residues 73–95; that stretch reads EVYLALDVLFCTSSIVHLCAISL. The Cytoplasmic portion of the chain corresponds to 96-117; it reads DRYWAVSRALEYNCKRTPRRIK. Residues 118–140 traverse the membrane as a helical segment; it reads CIILTVWLIAAAISLPPLIYKGD. At 141–156 the chain is on the extracellular side; that stretch reads QGPQPHGAPQCKLNQE. The helical transmembrane segment at 157–180 threads the bilayer; the sequence is AWYILSSSLGSFFVPCLIMILVYL. At 181-358 the chain is on the cytoplasmic side; that stretch reads RIYLIAKRSH…LSREKRFTFV (178 aa). Positions 191–318 are disordered; the sequence is RRGPRAKGGP…GSPPLQQPQG (128 aa). The span at 281-298 shows a compositional bias: acidic residues; sequence LEEEAEEEEEEEEEEDEP. Over residues 299–312 the composition is skewed to low complexity; the sequence is QAVPVSPASVGSPP. A helical membrane pass occupies residues 359–382; it reads LAVVIGVFVLCWFPFFFSYSLSAI. At 383-391 the chain is on the extracellular side; that stretch reads CPQQCRVPH. A helical transmembrane segment spans residues 392-394; it reads GLF.

This sequence belongs to the G-protein coupled receptor 1 family. Adrenergic receptor subfamily. ADRA2B sub-subfamily. In terms of assembly, interacts with RAB26. Interacts with PPP1R9B. Interacts with GGA1, GGA2 and GGA3.

The protein resides in the cell membrane. Its function is as follows. Alpha-2 adrenergic receptors mediate the catecholamine-induced inhibition of adenylate cyclase through the action of G proteins. The protein is Alpha-2B adrenergic receptor (ADRA2B) of Oryctolagus cuniculus (Rabbit).